A 150-amino-acid polypeptide reads, in one-letter code: 3-dehydroquinate dehydratase (150 aa).

The active-site Proton acceptor is tyrosine 26. Asparagine 77, histidine 83, and aspartate 90 together coordinate substrate. Residue histidine 103 is the Proton donor of the active site. Substrate-binding positions include 104-105 (LS) and arginine 114.

This sequence belongs to the type-II 3-dehydroquinase family. As to quaternary structure, homododecamer.

It carries out the reaction 3-dehydroquinate = 3-dehydroshikimate + H2O. It participates in metabolic intermediate biosynthesis; chorismate biosynthesis; chorismate from D-erythrose 4-phosphate and phosphoenolpyruvate: step 3/7. Its function is as follows. Catalyzes a trans-dehydration via an enolate intermediate. This Erwinia tasmaniensis (strain DSM 17950 / CFBP 7177 / CIP 109463 / NCPPB 4357 / Et1/99) protein is 3-dehydroquinate dehydratase.